The sequence spans 557 residues: Carboxypeptidase Y homolog A (557 aa).

The signal sequence occupies residues 1-17; sequence MRVLPAAMLVGAATAAV. Positions 18–138 are excised as a propeptide; that stretch reads PPFQQVLGGN…KLEAYDLRVK (121 aa). Intrachain disulfides connect C193–C433, C327–C341, C351–C374, C358–C367, and C396–C403. N-linked (GlcNAc...) asparagine glycosylation occurs at N224. S280 is a catalytic residue. D472 is a catalytic residue. The N-linked (GlcNAc...) asparagine glycan is linked to N523. Residue H534 is part of the active site.

The protein belongs to the peptidase S10 family.

It is found in the vacuole. The catalysed reaction is Release of a C-terminal amino acid with broad specificity.. Vacuolar carboxypeptidase involved in degradation of small peptides. Digests preferentially peptides containing an aliphatic or hydrophobic residue in P1' position, as well as methionine, leucine or phenylalanine in P1 position of ester substrate. This Aspergillus niger (strain ATCC MYA-4892 / CBS 513.88 / FGSC A1513) protein is Carboxypeptidase Y homolog A (cpyA).